A 191-amino-acid chain; its full sequence is Ribosomal RNA small subunit methyltransferase G (191 aa).

S-adenosyl-L-methionine contacts are provided by residues G59, 111–112, and R124; that span reads IE.

It belongs to the methyltransferase superfamily. RNA methyltransferase RsmG family.

The protein resides in the cytoplasm. Its function is as follows. Specifically methylates the N7 position of a guanine in 16S rRNA. This chain is Ribosomal RNA small subunit methyltransferase G, found in Mycoplasma pneumoniae (strain ATCC 29342 / M129 / Subtype 1) (Mycoplasmoides pneumoniae).